The following is a 206-amino-acid chain: Lipid A acyltransferase PagP (206 aa).

An N-terminal signal peptide occupies residues M1–A22. The span at V26 to A46 shows a compositional bias: low complexity. The tract at residues V26–A50 is disordered. Residues H80, D123, and S124 contribute to the active site.

Belongs to the lipid A palmitoyltransferase family. Homodimer.

Its subcellular location is the cell outer membrane. It carries out the reaction a lipid A + a 1,2-diacyl-sn-glycero-3-phosphocholine = a hepta-acyl lipid A + a 2-acyl-sn-glycero-3-phosphocholine. The catalysed reaction is a lipid IVA + a 1,2-diacyl-sn-glycero-3-phosphocholine = a lipid IVB + a 2-acyl-sn-glycero-3-phosphocholine. The enzyme catalyses a lipid IIA + a 1,2-diacyl-sn-glycero-3-phosphocholine = a lipid IIB + a 2-acyl-sn-glycero-3-phosphocholine. Functionally, transfers a fatty acid residue from the sn-1 position of a phospholipid to the N-linked hydroxyfatty acid chain on the proximal unit of lipid A or its precursors. This Laribacter hongkongensis (strain HLHK9) protein is Lipid A acyltransferase PagP.